The following is a 197-amino-acid chain: Ribonuclease HII (197 aa).

The region spanning 11 to 197 is the RNase H type-2 domain; the sequence is GRIAGVDEVG…FGPVKRVLGL (187 aa). Residues Asp17, Glu18, and Asp109 each coordinate a divalent metal cation.

Belongs to the RNase HII family. It depends on Mn(2+) as a cofactor. Mg(2+) is required as a cofactor.

The protein resides in the cytoplasm. The enzyme catalyses Endonucleolytic cleavage to 5'-phosphomonoester.. In terms of biological role, endonuclease that specifically degrades the RNA of RNA-DNA hybrids. The protein is Ribonuclease HII of Edwardsiella ictaluri (strain 93-146).